The sequence spans 231 residues: Casein kinase II subunit beta (231 aa).

Belongs to the casein kinase 2 subunit beta family. As to quaternary structure, tetramer composed of two alpha chains, one beta chain and one beta' chain. In terms of processing, phosphorylated by alpha subunit.

Functionally, regulatory subunit of casein kinase II/CK2. As part of the kinase complex regulates the basal catalytic activity of the alpha subunit a constitutively active serine/threonine-protein kinase that phosphorylates a large number of substrates containing acidic residues C-terminal to the phosphorylated serine or threonine. This Schizosaccharomyces pombe (strain 972 / ATCC 24843) (Fission yeast) protein is Casein kinase II subunit beta.